A 257-amino-acid polypeptide reads, in one-letter code: MESEMSDPQPLQEERYDMSGARLALTLCVTKAREGSEVDMEALERMFRYLKFESTMKRDPTAQQFLEELDEFQQTIDNWEEPVSCAFVVLMAHGEEGLLKGEDEKMVRLEDLFEVLNNKNCKALRGKPKVYIIQACRGEHRDPGEELRGNEELGGDEELGGDEVAVLKNNPQSIPTYTDTLHIYSTVEGYLSYRHDEKGSGFIQTLTDVFIHKKGSILELTEEITRLMANTEVMQEGKPRKVNPEVQSTLRKKLYLQ.

Residues His93 and Cys136 contribute to the active site. Residues 156-167 constitute a propeptide that is removed on maturation; sequence DEELGGDEVAVL.

This sequence belongs to the peptidase C14A family. In terms of assembly, heterodimer of a large and a small subunit, both processed from the precursor; the mature active form is a p17/p10 dimer and the intermediate form a p20/p8 dimer. Maturation by proteolytic processing appears to be a two-step process. The precursor is processed by KLK7 to yield the p20/p8 intermediate form which acts the precursor to yield the p17/p10 mature form. Initially it was reported that cleavage by granzyme B, caspase-8 and -10 generates the two active subunits, however the physiological relevance has not been established. Embryo, adult liver and less in adult brain and kidney. Expressed in differentiating keratinocytes of embryonic skin (at protein level). Expressed in keratinocytes of adult skin suprabasal layers (at protein level).

Its subcellular location is the cytoplasm. It localises to the nucleus. Non-apoptotic caspase which is involved in epidermal differentiation. Seems to play a role in keratinocyte differentiation and is required for cornification. Regulates maturation of the epidermis by proteolytically processing filaggrin. In vitro is equally active on the synthetic caspase substrates WEHD-ACF and IETD-AFC. Involved in processing of prosaposin in the epidermis. May be involved in retinal pigment epithelium cell barrier function. The chain is Caspase-14 (Casp14) from Mus musculus (Mouse).